The sequence spans 425 residues: Trigger factor (425 aa).

The region spanning 163–248 (GDTAVIDFEG…VHEIKTKELP (86 aa)) is the PPIase FKBP-type domain.

This sequence belongs to the FKBP-type PPIase family. Tig subfamily.

It localises to the cytoplasm. It catalyses the reaction [protein]-peptidylproline (omega=180) = [protein]-peptidylproline (omega=0). In terms of biological role, involved in protein export. Acts as a chaperone by maintaining the newly synthesized protein in an open conformation. Functions as a peptidyl-prolyl cis-trans isomerase. The protein is Trigger factor of Bacillus cereus (strain ATCC 10987 / NRS 248).